The following is a 323-amino-acid chain: SURF1-like protein (323 aa).

Basic and acidic residues predominate over residues 57–71 (DAPKSRENREKDGGK). Residues 57-76 (DAPKSRENREKDGGKSKKSK) form a disordered region. A run of 2 helical transmembrane segments spans residues 81–101 (WSTG…LGIW) and 299–319 (HLNY…MWIH).

The protein belongs to the SURF1 family.

It localises to the mitochondrion inner membrane. Its function is as follows. Probably involved in the biogenesis of the COX complex. This is SURF1-like protein (sft-1) from Caenorhabditis elegans.